Here is a 242-residue protein sequence, read N- to C-terminus: Small ribosomal subunit protein uS2 (242 aa).

Belongs to the universal ribosomal protein uS2 family.

The polypeptide is Small ribosomal subunit protein uS2 (Shewanella piezotolerans (strain WP3 / JCM 13877)).